The following is a 3432-amino-acid chain: Genome polyprotein (3432 aa).

An interaction with host EXOC1 region spans residues T2–N15. Residues T2–E109 are Cytoplasmic-facing. Residues L37–V72 form a hydrophobic; homodimerization of capsid protein C region. Residues G106–A127 constitute a propeptide, ER anchor for the capsid protein C, removed in mature form by serine protease NS3. The chain crosses the membrane as a helical span at residues G110–L130. Over S131–N253 the chain is Extracellular. N-linked (GlcNAc...) asparagine; by host glycosylation is present at N142. Residues W254–S274 form a helical membrane-spanning segment. Over N275–R279 the chain is Cytoplasmic. Residues V280–S294 form a helical membrane-spanning segment. Over F295–L746 the chain is Extracellular. 6 disulfide bridges follow: C297–C324, C354–C410, C354–C415, C368–C399, C386–C410, and C386–C415. Residues D392 to G405 are fusion peptide. N448 is a glycosylation site (N-linked (GlcNAc...) asparagine; by host). 2 disulfides stabilise this stretch: C484-C581 and C598-C629. Residues F747–V767 form a helical membrane-spanning segment. Over N768–S773 the chain is Cytoplasmic. Residues I774–A794 traverse the membrane as a helical segment. The Extracellular segment spans residues D795–D1219. 6 cysteine pairs are disulfide-bonded: C798-C809, C849-C937, C973-C1017, C1074-C1123, C1085-C1106, and C1107-C1110. N924 and N1001 each carry an N-linked (GlcNAc...) asparagine; by host glycan. A helical transmembrane segment spans residues V1220–M1240. At L1241–N1250 the chain is on the cytoplasmic side. The helical transmembrane segment at V1251 to V1271 threads the bilayer. A topological domain (lumenal) is located at residue H1272. The chain crosses the membrane as a helical span at residues G1273–T1293. The Cytoplasmic segment spans residues S1294–R1309. A helical membrane pass occupies residues A1310–H1330. Residues E1331 to G1341 lie on the Lumenal side of the membrane. Residues A1342–A1362 traverse the membrane as a helical segment. At G1363–G1374 the chain is on the cytoplasmic side. The chain crosses the membrane as a helical span at residues W1375–A1395. Over E1396–D1398 the chain is Lumenal. Residues I1399–S1419 traverse the membrane as a helical segment. Topologically, residues G1420–S1476 are cytoplasmic. Residues L1427–V1466 are interacts with and activates NS3 protease. The segment at residues C1477–L1497 is an intramembrane region (helical). Residues T1498–A2173 lie on the Cytoplasmic side of the membrane. Residues G1505 to A1682 form the Peptidase S7 domain. Catalysis depends on charge relay system; for serine protease NS3 activity residues H1555, D1579, and S1639. One can recognise a Helicase ATP-binding domain in the interval P1685–Q1841. The tract at residues R1689 to Q1692 is important for RNA-binding. Residue L1698–T1705 participates in ATP binding. Positions D1789–H1792 match the DEAH box motif. The 166-residue stretch at G1852–E2017 folds into the Helicase C-terminal domain. N6-acetyllysine; by host is present on K1893. The interval N1950–Q1972 is disordered. Residues E2168–D2172 form a regulates the ATPase activity of NS3 helicase region. Residues L2174–M2194 traverse the membrane as a helical segment. The Lumenal segment spans residues M2195 to G2199. The helical intramembrane region spans I2200–A2220. A topological domain (lumenal) is located at residue E2221. The helical transmembrane segment at V2222–I2242 threads the bilayer. The Cytoplasmic segment spans residues P2243 to A2257. The helical transmembrane segment at V2258–L2278 threads the bilayer. Residues E2279–A2311 are Lumenal-facing. The helical intramembrane region spans T2312 to I2332. Residues T2333–G2368 lie on the Lumenal side of the membrane. A helical transmembrane segment spans residues L2369 to L2389. At A2390–K2444 the chain is on the cytoplasmic side. A helical transmembrane segment spans residues V2445–T2465. Topologically, residues T2466–E2469 are lumenal. The helical transmembrane segment at A2470–W2490 threads the bilayer. Residues N2491–I3432 are Cytoplasmic-facing. The mRNA cap 0-1 NS5-type MT domain maps to G2528 to A2793. Position 2583 (S2583) interacts with S-adenosyl-L-methionine. S2583 is subject to Phosphoserine. K2588 functions as the For 2'-O-MTase activity in the catalytic mechanism. S-adenosyl-L-methionine-binding residues include G2613, W2614, T2631, K2632, D2658, and V2659. The active-site For 2'-O-MTase activity is D2673. An S-adenosyl-L-methionine-binding site is contributed by I2674. Active-site for 2'-O-MTase activity residues include K2709 and E2745. An S-adenosyl-L-methionine-binding site is contributed by Y2747. The Zn(2+) site is built by E2967, H2971, C2976, and C2979. The RdRp catalytic domain maps to G3057–A3209. Residues H3244, C3260, and C3379 each contribute to the Zn(2+) site.

This sequence in the N-terminal section; belongs to the class I-like SAM-binding methyltransferase superfamily. mRNA cap 0-1 NS5-type methyltransferase family. Homodimer. Interacts (via N-terminus) with host EXOC1 (via C-terminus); this interaction results in EXOC1 degradation through the proteasome degradation pathway. As to quaternary structure, forms heterodimers with envelope protein E in the endoplasmic reticulum and Golgi. In terms of assembly, homodimer; in the endoplasmic reticulum and Golgi. Interacts with protein prM. Interacts with non-structural protein 1. Interacts with host HSPA5. Homodimer; Homohexamer when secreted. Interacts with envelope protein E. NS1 interacts with NS4B. Interacts with host complement protein CFH; this interaction leads to the degradation of C3. As to quaternary structure, interacts (via N-terminus) with serine protease NS3. In terms of assembly, forms a heterodimer with serine protease NS3. May form homooligomers. Forms a heterodimer with NS2B. Interacts with non-structural protein 2A (via N-terminus). Interacts with NS4B. Interacts with unphosphorylated RNA-directed RNA polymerase NS5; this interaction stimulates RNA-directed RNA polymerase NS5 guanylyltransferase activity. Interacts with host ILF2. As to quaternary structure, interacts with serine protease NS3. In terms of assembly, homodimer. Interacts with host STAT2; this interaction inhibits the phosphorylation of the latter, and, when all viral proteins are present (polyprotein), targets STAT2 for degradation. Interacts with serine protease NS3. It depends on Mn(2+) as a cofactor. Mg(2+) is required as a cofactor. Post-translationally, specific enzymatic cleavages in vivo yield mature proteins. Cleavages in the lumen of endoplasmic reticulum are performed by host signal peptidase, whereas cleavages in the cytoplasmic side are performed by serine protease NS3. Signal cleavage at the 2K-4B site requires a prior NS3 protease-mediated cleavage at the 4A-2K site. In terms of processing, cleaved in post-Golgi vesicles by a host furin, releasing the mature small envelope protein M, and peptide pr. This cleavage is incomplete as up to 30% of viral particles still carry uncleaved prM. N-glycosylated. Post-translationally, N-glycosylated. The excreted form is glycosylated and this is required for efficient secretion of the protein from infected cells. In terms of processing, acetylated by host KAT5. Acetylation modulates NS3 RNA-binding and unwinding activities and plays an important positive role for viral replication. Phosphorylated on serines residues. This phosphorylation may trigger NS5 nuclear localization.

The protein resides in the virion. It is found in the host nucleus. Its subcellular location is the host cytoplasm. It localises to the host perinuclear region. The protein localises to the secreted. The protein resides in the virion membrane. It is found in the host endoplasmic reticulum membrane. Its subcellular location is the host cell surface. The enzyme catalyses Selective hydrolysis of -Xaa-Xaa-|-Yaa- bonds in which each of the Xaa can be either Arg or Lys and Yaa can be either Ser or Ala.. It catalyses the reaction RNA(n) + a ribonucleoside 5'-triphosphate = RNA(n+1) + diphosphate. The catalysed reaction is a ribonucleoside 5'-triphosphate + H2O = a ribonucleoside 5'-diphosphate + phosphate + H(+). It carries out the reaction ATP + H2O = ADP + phosphate + H(+). The enzyme catalyses a 5'-end (5'-triphosphoguanosine)-ribonucleoside in mRNA + S-adenosyl-L-methionine = a 5'-end (N(7)-methyl 5'-triphosphoguanosine)-ribonucleoside in mRNA + S-adenosyl-L-homocysteine. It catalyses the reaction a 5'-end (N(7)-methyl 5'-triphosphoguanosine)-ribonucleoside in mRNA + S-adenosyl-L-methionine = a 5'-end (N(7)-methyl 5'-triphosphoguanosine)-(2'-O-methyl-ribonucleoside) in mRNA + S-adenosyl-L-homocysteine + H(+). Its function is as follows. Plays a role in virus budding by binding to the cell membrane and gathering the viral RNA into a nucleocapsid that forms the core of a mature virus particle. During virus entry, may induce genome penetration into the host cytoplasm after hemifusion induced by the surface proteins. Can migrate to the cell nucleus where it modulates host functions. Overcomes the anti-viral effects of host EXOC1 by sequestering and degrading the latter through the proteasome degradation pathway. In terms of biological role, inhibits RNA silencing by interfering with host Dicer. Functionally, prevents premature fusion activity of envelope proteins in trans-Golgi by binding to envelope protein E at pH6.0. After virion release in extracellular space, gets dissociated from E dimers. Acts as a chaperone for envelope protein E during intracellular virion assembly by masking and inactivating envelope protein E fusion peptide. prM is the only viral peptide matured by host furin in the trans-Golgi network probably to avoid catastrophic activation of the viral fusion activity in acidic Golgi compartment prior to virion release. prM-E cleavage is inefficient, and many virions are only partially matured. These uncleaved prM would play a role in immune evasion. Its function is as follows. May play a role in virus budding. Exerts cytotoxic effects by activating a mitochondrial apoptotic pathway through M ectodomain. May display a viroporin activity. In terms of biological role, binds to host cell surface receptor and mediates fusion between viral and cellular membranes. Efficient virus attachment to cell is, at least in part, mediated by host HSPA5. Envelope protein is synthesized in the endoplasmic reticulum in the form of heterodimer with protein prM. They play a role in virion budding in the ER, and the newly formed immature particle is covered with 60 spikes composed of heterodimer between precursor prM and envelope protein E. The virion is transported to the Golgi apparatus where the low pH causes dissociation of PrM-E heterodimers and formation of E homodimers. prM-E cleavage is inefficient, and many virions are only partially matured. These uncleaved prM would play a role in immune evasion. Functionally, involved in immune evasion, pathogenesis and viral replication. Once cleaved off the polyprotein, is targeted to three destinations: the viral replication cycle, the plasma membrane and the extracellular compartment. Essential for viral replication. Required for formation of the replication complex and recruitment of other non-structural proteins to the ER-derived membrane structures. Excreted as a hexameric lipoparticle that plays a role against host immune response. Antagonizing the complement function. Binds to the host macrophages and dendritic cells. Inhibits signal transduction originating from Toll-like receptor 3 (TLR3). Component of the viral RNA replication complex that functions in virion assembly and antagonizes the host alpha/beta interferon antiviral response. Its function is as follows. Required cofactor for the serine protease function of NS3. May have membrane-destabilizing activity and form viroporins. In terms of biological role, displays three enzymatic activities: serine protease, NTPase and RNA helicase. NS3 serine protease, in association with NS2B, performs its autocleavage and cleaves the polyprotein at dibasic sites in the cytoplasm: C-prM, NS2A-NS2B, NS2B-NS3, NS3-NS4A, NS4A-2K and NS4B-NS5. NS3 RNA helicase binds RNA and unwinds dsRNA in the 3' to 5' direction. Functionally, regulates the ATPase activity of the NS3 helicase activity. NS4A allows NS3 helicase to conserve energy during unwinding. Functions as a signal peptide for NS4B and is required for the interferon antagonism activity of the latter. Its function is as follows. Induces the formation of ER-derived membrane vesicles where the viral replication takes place. Inhibits interferon (IFN)-induced host STAT1 phosphorylation and nuclear translocation, thereby preventing the establishment of cellular antiviral state by blocking the IFN-alpha/beta pathway. Inhibits STAT2 translocation in the nucleus after IFN-alpha treatment. In terms of biological role, replicates the viral (+) and (-) RNA genome. Performs the capping of genomes in the cytoplasm. NS5 methylates viral RNA cap at guanine N-7 and ribose 2'-O positions. Besides its role in RNA genome replication, also prevents the establishment of cellular antiviral state by blocking the interferon-alpha/beta (IFN-alpha/beta) signaling pathway. Inhibits host TYK2 and STAT2 phosphorylation, thereby preventing activation of JAK-STAT signaling pathway. The polypeptide is Genome polyprotein (Ardeidae (herons)).